Consider the following 63-residue polypeptide: Lantipeptide Flvbeta.a (63 aa).

Positions 1–28 are cleaved as a propeptide — cleaved by FlvT; sequence MSEKNMEKAGVVKADELDEMIDETTGGA. 2,3-didehydrobutyrine; by FlvM2 occurs at positions 30, 33, 38, and 39. Residues 43-49 constitute a cross-link (lanthionine (Ser-Cys); by FlvM2); the sequence is SKGLQNC. A 2,3-didehydrobutyrine; by FlvM2 mark is found at Thr-54 and Thr-55.

In terms of processing, maturation of FlvA2 peptides involves the enzymatic conversion of Thr, and Ser into dehydrated AA and the formation of thioether bonds with cysteines. Modifications are processed by the flavecin synthetase FlvM2. This is followed by membrane translocation and cleavage of the modified precursor. Contains DL-lanthionine, when coepressed in E.coli with the flavecin synthetase FlvM2.

The protein resides in the secreted. Lanthionine-containing peptide that does probably not show antibacterial activity, since its analog [+3]Flvbeta.a does not show antibacterial activity against M.luteus. Also does not show antibiotic activity when tested with [Del2]Flvalpha.a, an analog of Flvalpha.a, which is encoded by the same operon than Flvbeta.a. The bactericidal activity of lantibiotics is based on depolarization of energized bacterial cytoplasmic membranes, initiated by the formation of aqueous transmembrane pores. This chain is Lantipeptide Flvbeta.a, found in Ruminococcus flavefaciens.